The chain runs to 247 residues: Aliphatic sulfonates import ATP-binding protein SsuB 3 (247 aa).

Residues 13 to 227 (VRVRGAGRAF…SVVDPEFSAL (215 aa)) form the ABC transporter domain. 45–52 (GASGSGKS) is an ATP binding site.

The protein belongs to the ABC transporter superfamily. Aliphatic sulfonates importer (TC 3.A.1.17.2) family. The complex is composed of two ATP-binding proteins (SsuB), two transmembrane proteins (SsuC) and a solute-binding protein (SsuA).

Its subcellular location is the cell membrane. The enzyme catalyses ATP + H2O + aliphatic sulfonate-[sulfonate-binding protein]Side 1 = ADP + phosphate + aliphatic sulfonateSide 2 + [sulfonate-binding protein]Side 1.. Functionally, part of the ABC transporter complex SsuABC involved in aliphatic sulfonates import. Responsible for energy coupling to the transport system. The protein is Aliphatic sulfonates import ATP-binding protein SsuB 3 of Nocardia farcinica (strain IFM 10152).